A 277-amino-acid polypeptide reads, in one-letter code: Release factor glutamine methyltransferase (277 aa).

Residues 117 to 121 (GTGTG), D140, W168, and N183 contribute to the S-adenosyl-L-methionine site. Position 183–186 (183–186 (NPPY)) interacts with substrate.

The protein belongs to the protein N5-glutamine methyltransferase family. PrmC subfamily.

The catalysed reaction is L-glutaminyl-[peptide chain release factor] + S-adenosyl-L-methionine = N(5)-methyl-L-glutaminyl-[peptide chain release factor] + S-adenosyl-L-homocysteine + H(+). In terms of biological role, methylates the class 1 translation termination release factors RF1/PrfA and RF2/PrfB on the glutamine residue of the universally conserved GGQ motif. The polypeptide is Release factor glutamine methyltransferase (Shigella dysenteriae serotype 1 (strain Sd197)).